We begin with the raw amino-acid sequence, 196 residues long: Serine recombinase PinQ (196 aa).

Residues 3–143 (QIFAYCRIST…SGIVRARGAG (141 aa)) enclose the Resolvase/invertase-type recombinase catalytic domain. Ser11 acts as the O-(5'-phospho-DNA)-serine intermediate in catalysis.

It belongs to the site-specific recombinase resolvase family.

This chain is Serine recombinase PinQ (pinQ), found in Escherichia coli (strain K12).